The primary structure comprises 403 residues: Phosphopentomutase (403 aa).

The Mn(2+) site is built by aspartate 13, aspartate 298, histidine 303, aspartate 339, histidine 340, and histidine 351.

The protein belongs to the phosphopentomutase family. The cofactor is Mn(2+).

It is found in the cytoplasm. The catalysed reaction is 2-deoxy-alpha-D-ribose 1-phosphate = 2-deoxy-D-ribose 5-phosphate. It catalyses the reaction alpha-D-ribose 1-phosphate = D-ribose 5-phosphate. It participates in carbohydrate degradation; 2-deoxy-D-ribose 1-phosphate degradation; D-glyceraldehyde 3-phosphate and acetaldehyde from 2-deoxy-alpha-D-ribose 1-phosphate: step 1/2. Functionally, isomerase that catalyzes the conversion of deoxy-ribose 1-phosphate (dRib-1-P) and ribose 1-phosphate (Rib-1-P) to deoxy-ribose 5-phosphate (dRib-5-P) and ribose 5-phosphate (Rib-5-P), respectively. The protein is Phosphopentomutase of Streptococcus thermophilus.